The sequence spans 149 residues: MSLVRRSNVFDPFADFWDPFDGVFRSLVPATSDRDTAAFANARVDWKETPESHVFKADLPGVKKEEVKVEVEEGNVLVISGQRSKEKEDKNDKWHRVERSSGQFMRRFRLPENAKVDQVKASMENGVLTVTVPKAEVKKPEVKAIEISG.

The region spanning 35-149 (DTAAFANARV…PEVKAIEISG (115 aa)) is the sHSP domain.

The protein belongs to the small heat shock protein (HSP20) family. In terms of assembly, may form oligomeric structures.

It is found in the cytoplasm. This is 16.9 kDa class I heat shock protein 3 (HSP16.9C) from Oryza sativa subsp. japonica (Rice).